We begin with the raw amino-acid sequence, 117 residues long: Large ribosomal subunit protein bL20 (117 aa).

Belongs to the bacterial ribosomal protein bL20 family.

Its function is as follows. Binds directly to 23S ribosomal RNA and is necessary for the in vitro assembly process of the 50S ribosomal subunit. It is not involved in the protein synthesizing functions of that subunit. The sequence is that of Large ribosomal subunit protein bL20 from Mesomycoplasma hyopneumoniae (strain J / ATCC 25934 / NCTC 10110) (Mycoplasma hyopneumoniae).